The primary structure comprises 435 residues: Probable E3 ubiquitin-protein ligase makorin-1 (435 aa).

2 C3H1-type zinc fingers span residues 18 to 45 and 48 to 75; these read WTKH…HDLT and KPAA…HCKP. Residues 81–109 are disordered; it reads LPAPQMLPLPSASLAGPSDPEPSGPTPVP. The span at 99-108 shows a compositional bias: pro residues; sequence DPEPSGPTPV. Residues 155 to 182 form a C3H1-type 3 zinc finger; it reads QLRKQLCPYAAVGECRYGINCAYLHGDV. Positions 183–210 are makorin-type Cys-His; sequence CYMCGLQVLHPTDNNQRSEHTKACIEAH. The segment at 228-282 adopts an RING-type zinc-finger fold; the sequence is CGVCMEVVFEKANPSERRFGILSNCSHCYCLKCIRKWRSAKQFESKIIKSCPECR. The C3H1-type 4 zinc finger occupies 311–340; that stretch reads GMGSKPCRYFDEGRGTCPFGSNCFYKHAFP. The segment at 345–369 is disordered; sequence EEAQPQRRQTGSNSRNRNSRRTPLW.

Weakly expressed in adult brain, heart and kidney.

It carries out the reaction S-ubiquitinyl-[E2 ubiquitin-conjugating enzyme]-L-cysteine + [acceptor protein]-L-lysine = [E2 ubiquitin-conjugating enzyme]-L-cysteine + N(6)-ubiquitinyl-[acceptor protein]-L-lysine.. It participates in protein modification; protein ubiquitination. Its function is as follows. E3 ubiquitin ligase catalyzing the covalent attachment of ubiquitin moieties onto substrate proteins. This Seriola quinqueradiata (Five-ray yellowtail) protein is Probable E3 ubiquitin-protein ligase makorin-1.